Consider the following 299-residue polypeptide: MLDNTRLRIAIQKSGRLSDDSRELLARCGIKINLHTQRLIAMAENMPIDILRVRDDDIPGLVMDGVVDLGIIGENVLEEELLNRRAQGEDPRYFTLRRLDFGGCRLSLATPVDEAWDGPAALDGKRIATSYPHLLKRYLDQKGVSFKSCLLNGSVEVAPRAGLADAICDLVSTGATLEANGLREVEVIYRSKACLIQRDGEMAQSKQQLIDKLLTRIQGVIQARESKYIMMHAPSERLEEVIALLPGAERPTILPLAGEQQRVAMHMVSSETLFWETMEKLKALGASSILVLPIEKMME.

The protein belongs to the ATP phosphoribosyltransferase family. Long subfamily. As to quaternary structure, equilibrium between an active dimeric form, an inactive hexameric form and higher aggregates. Interconversion between the various forms is largely reversible and is influenced by the natural substrates and inhibitors of the enzyme. The cofactor is Mg(2+).

It is found in the cytoplasm. It catalyses the reaction 1-(5-phospho-beta-D-ribosyl)-ATP + diphosphate = 5-phospho-alpha-D-ribose 1-diphosphate + ATP. Its pathway is amino-acid biosynthesis; L-histidine biosynthesis; L-histidine from 5-phospho-alpha-D-ribose 1-diphosphate: step 1/9. Its activity is regulated as follows. Feedback inhibited by histidine. In terms of biological role, catalyzes the condensation of ATP and 5-phosphoribose 1-diphosphate to form N'-(5'-phosphoribosyl)-ATP (PR-ATP). Has a crucial role in the pathway because the rate of histidine biosynthesis seems to be controlled primarily by regulation of HisG enzymatic activity. The sequence is that of ATP phosphoribosyltransferase from Salmonella enteritidis PT4 (strain P125109).